The sequence spans 559 residues: Glypican-1 (559 aa).

Residues 1–23 (MELRARGWWLLYAAAVLVACARG) form the signal peptide. Cystine bridges form between Cys-32–Cys-68, Cys-62–Cys-256, Cys-69–Cys-259, Cys-191–Cys-343, Cys-246–Cys-279, Cys-268–Cys-415, and Cys-272–Cys-401. N-linked (GlcNAc...) asparagine glycans are attached at residues Asn-79 and Asn-116. The tract at residues 478-539 (FQDASDDGSG…SAAAPTPPQA (62 aa)) is disordered. O-linked (Xyl...) (heparan sulfate) serine glycans are attached at residues Ser-486, Ser-488, and Ser-490. Residue Ser-530 is the site of GPI-anchor amidated serine attachment. A propeptide spans 531 to 559 (AAAPTPPQASPLLLLGLALALPAVAPRGR) (removed in mature form).

Belongs to the glypican family. S-nitrosylated in a Cu(2+)-dependent manner. Nitric acid (NO) is released from the nitrosylated cysteines by ascorbate or by some other reducing agent, in a Cu(2+) or Zn(2+) dependent manner. This free nitric oxide is then capable of cleaving the heparan sulfate side chains. In terms of processing, N- and O-glycosylated. N-glycosylation is mainly of the complex type containing sialic acid. O-glycosylated with heparan sulfate. The heparan sulfate chains can be cleaved either by the action of heparanase or, degraded by a deaminative process that uses nitric oxide (NO) released from the S-nitrosylated cysteines. This process is triggered by ascorbate, or by some other reducing agent, in a Cu(2+)- or Zn(2+) dependent manner. Cu(2+) ions are provided by ceruloproteins such as APP, PRNP or CP which associate with GCP1 in intracellular compartments or lipid rafts. Post-translationally, shed from the cell surface probably by further cleavage.

Its subcellular location is the cell membrane. The protein resides in the endosome. The protein localises to the secreted. It is found in the extracellular space. In terms of biological role, cell surface proteoglycan that bears heparan sulfate. Binds, via the heparan sulfate side chains, alpha-4 (V) collagen and participates in Schwann cell myelination. May act as a catalyst in increasing the rate of conversion of prion protein PRPN (C) to PRNP (Sc) via associating (via the heparan sulfate side chains) with both forms of PRPN, targeting them to lipid rafts and facilitating their interaction. Required for proper skeletal muscle differentiation by sequestering FGF2 in lipid rafts preventing its binding to receptors (FGFRs) and inhibiting the FGF-mediated signaling. This chain is Glypican-1 (GPC1), found in Bos taurus (Bovine).